The following is a 208-amino-acid chain: CASP-like protein 4A4 (208 aa).

Residues 1–53 lie on the Cytoplasmic side of the membrane; it reads MKELKDHVVVITYGPSSEASVTASPVSQQTPSLFAYSVTPSASRFSSRRASVH. A helical membrane pass occupies residues 54–74; it reads VIGLVLRFITMVLCFVSALSL. Over 75–92 the chain is Extracellular; it reads AVNVQRPSKRHLTQNSSS. The N-linked (GlcNAc...) asparagine glycan is linked to Asn89. A helical transmembrane segment spans residues 93–113; that stretch reads FASYPELLYCFGVAVIGFVYT. At 114-141 the chain is on the cytoplasmic side; that stretch reads SLQTFKGVCDITHRGVLISEPLSDYISF. The chain crosses the membrane as a helical span at residues 142-162; the sequence is IFDQVICYLLVSSSSVAIAWI. Residues 163–176 are Extracellular-facing; sequence QHINEDAIKTLRNN. An N-linked (GlcNAc...) asparagine glycan is attached at Asn175. Residues 177–197 form a helical membrane-spanning segment; it reads SIVSVSMSFSAFLVLTLSGLL. Topologically, residues 198-208 are cytoplasmic; sequence SGYKLCKRFMW.

This sequence belongs to the Casparian strip membrane proteins (CASP) family. As to quaternary structure, homodimer and heterodimers.

It is found in the cell membrane. The protein is CASP-like protein 4A4 of Arabidopsis thaliana (Mouse-ear cress).